We begin with the raw amino-acid sequence, 472 residues long: Phosphoenolpyruvate carboxylase (472 aa).

It belongs to the PEPCase type 2 family. As to quaternary structure, homotetramer. Mg(2+) is required as a cofactor.

It catalyses the reaction oxaloacetate + phosphate = phosphoenolpyruvate + hydrogencarbonate. In terms of biological role, catalyzes the irreversible beta-carboxylation of phosphoenolpyruvate (PEP) to form oxaloacetate (OAA), a four-carbon dicarboxylic acid source for the tricarboxylic acid cycle. In Pyrococcus furiosus (strain ATCC 43587 / DSM 3638 / JCM 8422 / Vc1), this protein is Phosphoenolpyruvate carboxylase.